The chain runs to 300 residues: Cysteine-rich venom protein (300 aa).

Positions 1–21 are cleaved as a signal peptide; it reads MLSTMQTVGAVLMLSIVLVAG. The propeptide occupies 22-24; sequence RKR. The SCP domain maps to 62-183; sequence LEMHNKIRAD…GNNKYFVCNY (122 aa).

Contains 11 disulfide bonds. As to expression, expressed by the venom duct.

It localises to the secreted. Protease responsible for cleaving the conotoxins from their propeptide precursors. The target propeptide requires minimum four residues including a leucine N-terminal of the cleavage site for efficient substrate processing (example: Xaa-Xaa-Xaa-Leu-Asn-Lys-Arg-toxin). In Conus textile (Cloth-of-gold cone), this protein is Cysteine-rich venom protein.